Consider the following 296-residue polypeptide: Ribosome biogenesis GTPase A (296 aa).

The CP-type G domain occupies Arg14–Pro178. GTP contacts are provided by residues Asn58 to Asp61, Asn130 to Thr135, and Gly174.

It belongs to the TRAFAC class YlqF/YawG GTPase family. MTG1 subfamily. As to quaternary structure, interacts with ctc. Interacts with the immature 50S ribosome subunit. 2 molecules of rbgA bind to one 50S subunit.

It localises to the cytoplasm. In terms of biological role, essential protein that is required for a late step of 50S ribosomal subunit assembly. Has GTPase activity that is stimulated by interaction with the immature 50S ribosome subunit. Binds to the 23S rRNA. Required for the association of ribosomal proteins rplP and rpmA with the large subunit. This is Ribosome biogenesis GTPase A from Bacillus cereus (strain ATCC 14579 / DSM 31 / CCUG 7414 / JCM 2152 / NBRC 15305 / NCIMB 9373 / NCTC 2599 / NRRL B-3711).